Here is a 490-residue protein sequence, read N- to C-terminus: Cytochrome P450 2C39 (490 aa).

The N-terminal stretch at 1 to 25 (MDLVTFLVLTLSSLILLSLWRQSCG) is a signal peptide. C435 is a heme binding site.

The protein belongs to the cytochrome P450 family. Requires heme as cofactor. As to expression, liver.

The protein localises to the endoplasmic reticulum membrane. The protein resides in the microsome membrane. The enzyme catalyses an organic molecule + reduced [NADPH--hemoprotein reductase] + O2 = an alcohol + oxidized [NADPH--hemoprotein reductase] + H2O + H(+). The catalysed reaction is (5Z,8Z,11Z,14Z)-eicosatetraenoate + reduced [NADPH--hemoprotein reductase] + O2 = 11,12-epoxy-(5Z,8Z,14Z)-eicosatrienoate + oxidized [NADPH--hemoprotein reductase] + H2O + H(+). It carries out the reaction (5Z,8Z,11Z,14Z)-eicosatetraenoate + reduced [NADPH--hemoprotein reductase] + O2 = 14,15-epoxy-(5Z,8Z,11Z)-eicosatrienoate + oxidized [NADPH--hemoprotein reductase] + H2O + H(+). Its pathway is lipid metabolism; arachidonate metabolism. In terms of biological role, a cytochrome P450 monooxygenase that primarily catalyzes the epoxidation of 11,12 and 14,15 double bonds of (5Z,8Z,11Z,14Z)-eicosatetraenoic acid (arachidonate) forming 11,12- and 14,15-epoxyeicosatrienoic acids (11,12- and 14,15-EET) regioisomers. Mechanistically, uses molecular oxygen inserting one oxygen atom into a substrate, and reducing the second into a water molecule, with two electrons provided by NADPH via cytochrome P450 reductase (CPR; NADPH--hemoprotein reductase). The polypeptide is Cytochrome P450 2C39 (Mus musculus (Mouse)).